Consider the following 163-residue polypeptide: Meiotically up-regulated gene 109 protein (163 aa).

4 helical membrane passes run 61–78 (YRFY…FFIW), 82–104 (ALLA…SLTI), 114–134 (YSIP…APVG), and 136–156 (LFWS…LTTY).

It is found in the membrane. Its function is as follows. Has a role in meiosis. The protein is Meiotically up-regulated gene 109 protein (mug109) of Schizosaccharomyces pombe (strain 972 / ATCC 24843) (Fission yeast).